The sequence spans 379 residues: MSAGSPKFTVRRIAALSLVSLWLAGCSDTSNPPAPVSSVNGNAPANTNSGMLITPPPKMGTTSTAQQPQIQPVQQPQIQATQQPQIQPVQPVAQQPVQMENGRIVYNRQYGNIPKGSYSGSTYTVKKGDTLFYIAWITGNDFRDLAQRNNIQAPYALNVGQTLQVGNASGTPITGGNAITQADAAEQGVVIKPAQNSTVAVASQPTITYSESSGEQSANKMLPNNKPTATTVTAPVTVPTASTTEPTVSSTSTSTPISTWRWPTEGKVIETFGASEGGNKGIDIAGSKGQAIIATADGRVVYAGNALRGYGNLIIIKHNDDYLSAYAHNDTMLVREQQEVKAGQKIATMGSTGTSSTRLHFEIRYKGKSVNPLRYLPQR.

A signal peptide spans 1–25 (MSAGSPKFTVRRIAALSLVSLWLAG). Cys26 carries the N-palmitoyl cysteine lipid modification. Cys26 is lipidated: S-diacylglycerol cysteine. The segment covering 30–51 (SNPPAPVSSVNGNAPANTNSGM) has biased composition (polar residues). The tract at residues 30-67 (SNPPAPVSSVNGNAPANTNSGMLITPPPKMGTTSTAQQ) is disordered. One copy of the 1-1 repeat lies at 66–73 (QQPQIQPV). Residues 66 to 97 (QQPQIQPVQQPQIQATQQPQIQPVQPVAQQPV) are 4 X 8 AA tandem repeats of Q-Q-P-Q-I-Q-P-V. Residues 74-81 (QQPQIQAT) form a 1-2; approximate repeat. The stretch at 82-89 (QQPQIQPV) is one 1-3 repeat. One copy of the 1-4; approximate repeat lies at 90 to 97 (QPVAQQPV). In terms of domain architecture, LysM spans 121-165 (STYTVKKGDTLFYIAWITGNDFRDLAQRNNIQAPYALNVGQTLQV). 4 tandem repeats follow at residues 205–211 (PTITYSE), 227–233 (PTATTVT), 239–245 (PTASTTE), and 246–252 (PTVSSTS). The interval 205-252 (PTITYSESSGEQSANKMLPNNKPTATTVTAPVTVPTASTTEPTVSSTS) is 4 X 7 AA approximate repeats. Polar residues predominate over residues 210-219 (SESSGEQSAN). 2 disordered regions span residues 210–231 (SESS…TATT) and 240–259 (TAST…PIST).

Belongs to the E.coli NlpD/Haemophilus LppB family.

It localises to the cell inner membrane. Activator of the cell wall hydrolase AmiC. Required for septal murein cleavage and daughter cell separation during cell division. The protein is Murein hydrolase activator NlpD (nlpD) of Escherichia coli (strain K12).